Here is a 1163-residue protein sequence, read N- to C-terminus: Actin cross-linking toxin VgrG1 (1163 aa).

In terms of domain architecture, ACD spans 728–1163; sequence TPDFPTHFPK…NPQEWQRIIA (436 aa). 739 to 743 provides a ligand contact to ATP; the sequence is SIGIE. Mg(2+)-binding residues include Glu743 and Glu805. Ser808 provides a ligand contact to ATP. A Mg(2+)-binding site is contributed by Gln889. Arg995 serves as a coordination point for ATP. Glu1066 provides a ligand contact to Mg(2+).

This sequence belongs to the VgrG protein family. In terms of assembly, interacts with protein VC1417. Mg(2+) serves as cofactor.

It is found in the secreted. The protein resides in the host cytoplasm. It localises to the host cytosol. In terms of biological role, part of the type VI secretion system (T6SS) specialized secretion system, which delivers several virulence factors in both prokaryotic and eukaryotic cells during infection. Forms the spike at the tip of the elongating tube probably formed by hemolysin co-regulated protein/Hcp. Allows the delivery of the TseL antibacterial toxin to target cells where it exerts its toxicity. Also acts directly as an actin-directed toxin that catalyzes the covalent cross-linking of host cytoplasmic monomeric actin. Mediates the cross-link between 'Lys-50' of one monomer and 'Glu-270' of another actin monomer, resulting in formation of highly toxic actin oligomers that cause cell rounding. The toxin can be highly efficient at very low concentrations by acting on formin homology family proteins: toxic actin oligomers bind with high affinity to formins and adversely affect both nucleation and elongation abilities of formins, causing their potent inhibition in both profilin-dependent and independent manners. Acts as an acid--amino-acid ligase that transfers the gamma-phosphoryl group of ATP to the 'Glu-270' actin residue, resulting in the formation of an activated acyl phosphate intermediate. This intermediate is further hydrolyzed and the energy of hydrolysis is utilized for the formation of the amide bond between actin subunits. This chain is Actin cross-linking toxin VgrG1, found in Vibrio cholerae serotype O1 (strain ATCC 39315 / El Tor Inaba N16961).